A 149-amino-acid chain; its full sequence is Nucleoside deoxyribosyltransferase (149 aa).

E90 serves as the catalytic Nucleophile.

It belongs to the nucleoside deoxyribosyltransferase family.

It carries out the reaction 2-deoxy-D-ribosyl-base(1) + base(2) = 2-deoxy-D-ribosyl-base(2) + base(1).. Its pathway is nucleotide metabolism; nucleotide salvage pathway. In terms of biological role, catalyzes the cleavage of the glycosidic bond of 2'-deoxyribonucleosides and the transfer of the deoxyribosyl moiety to an acceptor purine or pyrimidine base. This is Nucleoside deoxyribosyltransferase (ntd) from Lactobacillus johnsonii (strain CNCM I-12250 / La1 / NCC 533).